The following is a 187-amino-acid chain: Chlorobenzene dioxygenase subunit beta (187 aa).

It belongs to the bacterial ring-hydroxylating dioxygenase beta subunit family. As to quaternary structure, this dioxygenase system consists of four proteins: the two subunits of the oxygenase component (TecA1 and TecA2), a ferredoxin (TecA3) and a ferredoxin reductase (TecA4).

The enzyme catalyses chlorobenzene + NADH + O2 + H(+) = (1R,2R)-3-chlorocyclohexa-3,5-diene-1,2-diol + NAD(+). Its pathway is aromatic compound metabolism. Part of the oxygenase component of the chlorobenzene dioxygenase system that catalyzes the dihydroxylation of a range of aromatic compounds, including chlorinated benzenes and toluenes, and dinuclear aromatics such as biphenyl and dibenzo-p-dioxin. The beta subunit is not directly involved in the control of substrate specificity. The chain is Chlorobenzene dioxygenase subunit beta from Cupriavidus sp. (strain PS12).